The chain runs to 176 residues: Prepronociceptin (176 aa).

Residues 1–19 (MKVLLCDLLLLSLFSSVFS) form the signal peptide. 2 propeptides span residues 20–95 (SCQR…MQHL) and 169–176 (TLHQNGNV).

This sequence belongs to the opioid neuropeptide precursor family. In terms of processing, specific enzymatic cleavages at paired basic residues probably yield other active peptides besides nociceptin. The N-terminal domain contains 6 conserved cysteines thought to be involved in disulfide bonding and/or processing. Predominantly expressed in the brain and spinal cord. Also expressed and secreted by peripheral blood neutrophils following degranulation.

The protein resides in the secreted. Functionally, ligand of the opioid receptor-like receptor OPRL1. It may act as a transmitter in the brain by modulating nociceptive and locomotor behavior. May be involved in neuronal differentiation and development. Its function is as follows. Blocks nociceptin action in pain transmission by inhibiting nociceptin-induced hyperalgesia and allodynia. In terms of biological role, has potent analgesic activity. This Homo sapiens (Human) protein is Prepronociceptin (PNOC).